Reading from the N-terminus, the 789-residue chain is Phenylalanine--tRNA ligase beta subunit (789 aa).

The 114-residue stretch at 38–151 (KKHLQSFVVV…NTYNVGESFF (114 aa)) folds into the tRNA-binding domain. The region spanning 398-474 (HNDILLNFSP…RLYGYDKILE (77 aa)) is the B5 domain. Mg(2+) is bound by residues D452, D458, E461, and E462. In terms of domain architecture, FDX-ACB spans 694-787 (LRYQSVKRDF…ISKGFNGILR (94 aa)).

This sequence belongs to the phenylalanyl-tRNA synthetase beta subunit family. Type 1 subfamily. As to quaternary structure, tetramer of two alpha and two beta subunits. Requires Mg(2+) as cofactor.

The protein localises to the cytoplasm. It carries out the reaction tRNA(Phe) + L-phenylalanine + ATP = L-phenylalanyl-tRNA(Phe) + AMP + diphosphate + H(+). This is Phenylalanine--tRNA ligase beta subunit from Ehrlichia ruminantium (strain Gardel).